The primary structure comprises 547 residues: CTP synthase (547 aa).

The tract at residues 1–265 (MARFIFITGG…DQAVLDAFQI (265 aa)) is amidoligase domain. Residue Ser-13 coordinates CTP. Ser-13 contacts UTP. ATP contacts are provided by residues 14–19 (SLGKGL) and Asp-71. Mg(2+) contacts are provided by Asp-71 and Glu-139. CTP-binding positions include 146–148 (DIE), 186–191 (KTKPTQ), and Lys-222. UTP contacts are provided by residues 186-191 (KTKPTQ) and Lys-222. Positions 291-546 (KIAIVGKYVQ…VRAAKESSRL (256 aa)) constitute a Glutamine amidotransferase type-1 domain. Gly-353 provides a ligand contact to L-glutamine. Catalysis depends on Cys-380, which acts as the Nucleophile; for glutamine hydrolysis. Residues 381 to 384 (LGMQ), Glu-404, and Arg-474 each bind L-glutamine. Active-site residues include His-519 and Glu-521.

Belongs to the CTP synthase family. In terms of assembly, homotetramer.

The enzyme catalyses UTP + L-glutamine + ATP + H2O = CTP + L-glutamate + ADP + phosphate + 2 H(+). It carries out the reaction L-glutamine + H2O = L-glutamate + NH4(+). The catalysed reaction is UTP + NH4(+) + ATP = CTP + ADP + phosphate + 2 H(+). It participates in pyrimidine metabolism; CTP biosynthesis via de novo pathway; CTP from UDP: step 2/2. Allosterically activated by GTP, when glutamine is the substrate; GTP has no effect on the reaction when ammonia is the substrate. The allosteric effector GTP functions by stabilizing the protein conformation that binds the tetrahedral intermediate(s) formed during glutamine hydrolysis. Inhibited by the product CTP, via allosteric rather than competitive inhibition. Its function is as follows. Catalyzes the ATP-dependent amination of UTP to CTP with either L-glutamine or ammonia as the source of nitrogen. Regulates intracellular CTP levels through interactions with the four ribonucleotide triphosphates. This chain is CTP synthase, found in Ruegeria pomeroyi (strain ATCC 700808 / DSM 15171 / DSS-3) (Silicibacter pomeroyi).